A 157-amino-acid chain; its full sequence is Small ribosomal subunit protein uS7 (157 aa).

Belongs to the universal ribosomal protein uS7 family. In terms of assembly, part of the 30S ribosomal subunit. Contacts proteins S9 and S11.

Its function is as follows. One of the primary rRNA binding proteins, it binds directly to 16S rRNA where it nucleates assembly of the head domain of the 30S subunit. Is located at the subunit interface close to the decoding center, probably blocks exit of the E-site tRNA. The protein is Small ribosomal subunit protein uS7 of Psychrobacter cryohalolentis (strain ATCC BAA-1226 / DSM 17306 / VKM B-2378 / K5).